The chain runs to 252 residues: uncharacterized protein (252 aa).

Residues 3 to 58 form the HTH deoR-type domain; it reads AKDRIQAIKQMVANDKKVTVSNLSGIFQVTEETIRRDLEKLEDEGFLTRTYGGAVL. The H-T-H motif DNA-binding region spans 20 to 39; sequence VTVSNLSGIFQVTEETIRRD.

This is an uncharacterized protein from Escherichia coli (strain K12).